Consider the following 185-residue polypeptide: Elongation factor P (185 aa).

It belongs to the elongation factor P family.

Its subcellular location is the cytoplasm. The protein operates within protein biosynthesis; polypeptide chain elongation. Its function is as follows. Involved in peptide bond synthesis. Stimulates efficient translation and peptide-bond synthesis on native or reconstituted 70S ribosomes in vitro. Probably functions indirectly by altering the affinity of the ribosome for aminoacyl-tRNA, thus increasing their reactivity as acceptors for peptidyl transferase. The sequence is that of Elongation factor P from Thermotoga petrophila (strain ATCC BAA-488 / DSM 13995 / JCM 10881 / RKU-1).